The sequence spans 235 residues: Ribose-5-phosphate isomerase A (235 aa).

Substrate contacts are provided by residues 32-35 (TGST), 89-92 (DGAD), and 102-105 (KGGG). Glu111 serves as the catalytic Proton acceptor. A substrate-binding site is contributed by Lys129.

Belongs to the ribose 5-phosphate isomerase family. As to quaternary structure, homodimer.

The enzyme catalyses aldehydo-D-ribose 5-phosphate = D-ribulose 5-phosphate. Its pathway is carbohydrate degradation; pentose phosphate pathway; D-ribose 5-phosphate from D-ribulose 5-phosphate (non-oxidative stage): step 1/1. Catalyzes the reversible conversion of ribose-5-phosphate to ribulose 5-phosphate. In Synechocystis sp. (strain ATCC 27184 / PCC 6803 / Kazusa), this protein is Ribose-5-phosphate isomerase A.